The following is a 240-amino-acid chain: Cysteine-rich secretory protein (240 aa).

The signal sequence occupies residues 1–19; the sequence is MIAFIVLPILAAVLQQSSG. Positions 38-166 constitute an SCP domain; it reads VDLHNSLRRS…EYSYFYVCQY (129 aa). Cystine bridges form between C75–C153, C92–C167, C148–C164, C186–C193, C189–C198, C202–C235, C211–C229, and C220–C233. In terms of domain architecture, ShKT spans 202–235; the sequence is CTKEDKYSNCKSLVQQAGCQDKQMQSDCSAICFC.

This sequence belongs to the CRISP family. As to expression, expressed by the venom gland.

It localises to the secreted. In terms of biological role, weakly blocks contraction of smooth muscle elicited by high potassium-induced depolarization, but does not block caffeine-stimulated contraction. May target voltage-gated calcium channels on smooth muscle. The sequence is that of Cysteine-rich secretory protein from Crotalus adamanteus (Eastern diamondback rattlesnake).